Consider the following 84-residue polypeptide: Kidney-associated antigen 1 (84 aa).

The disordered stretch occupies residues 31-84 (PGAAAAHLPRWPPPQLAASRREAPPLSQRPHRTQGAGSPPETNEKLTNPQVKEK). Over residues 75–84 (KLTNPQVKEK) the composition is skewed to polar residues.

Expressed in testis and kidney, and, at lower levels, in urinary bladder and liver. Expressed by a high proportion of tumors of various histologic origin, including melanomas, sarcomas and colorectal carcinomas.

This Homo sapiens (Human) protein is Kidney-associated antigen 1 (KAAG1).